The sequence spans 558 residues: AP2-like ethylene-responsive transcription factor AIL5 (558 aa).

Residues 1–54 (MKNNNNKSSSSSSYDSSLSPSSSSSSHQNWLSFSLSNNNNNFNSSSNPNLTSST) are compositionally biased toward low complexity. 3 disordered regions span residues 1 to 65 (MKNN…PSHL), 74 to 93 (SPVE…ATAV), and 166 to 195 (HSSE…KNVE). 2 DNA-binding regions (AP2/ERF) span residues 203 to 269 (IYRG…TNFP) and 305 to 363 (MYRG…TNFD). The interval 387-406 (SPATAAADKTVDLSPSDSPS) is disordered.

It belongs to the AP2/ERF transcription factor family. AP2 subfamily. In terms of tissue distribution, expressed in roots, seedlings, inflorescence, and siliques. Also detected at low levels in leaves.

Its subcellular location is the nucleus. In terms of biological role, probably acts as a transcriptional activator. Binds to the GCC-box pathogenesis-related promoter element. May be involved in the regulation of gene expression by stress factors and by components of stress signal transduction pathways. Involved in the regulation of floral organs size. The chain is AP2-like ethylene-responsive transcription factor AIL5 from Arabidopsis thaliana (Mouse-ear cress).